The chain runs to 57 residues: Small ribosomal subunit protein bS21B (57 aa).

The segment at 37–57 (RYEKPSARRKRKAEAARKRRR) is disordered. Residues 43-57 (ARRKRKAEAARKRRR) are compositionally biased toward basic residues.

Belongs to the bacterial ribosomal protein bS21 family.

The polypeptide is Small ribosomal subunit protein bS21B (Gloeobacter violaceus (strain ATCC 29082 / PCC 7421)).